A 36-amino-acid polypeptide reads, in one-letter code: ATGSPAPDCVESFQSWRYTDVRNGCSDAVTVVVQYE.

A disulfide bridge connects residues Cys-9 and Cys-25.

Its function is as follows. Inhibits mammalian alpha-amylases specifically but has no action on plant and microbial alpha-amylases. This is Alpha-amylase inhibitor AI-3688 from Kitasatospora aureofaciens (Streptomyces aureofaciens).